The following is a 391-amino-acid chain: Transposase for insertion sequence element IS905 (391 aa).

This sequence belongs to the transposase mutator family.

Required for the transposition of the insertion element. In Lactococcus lactis subsp. lactis (strain IL1403) (Streptococcus lactis), this protein is Transposase for insertion sequence element IS905 (tra905).